Reading from the N-terminus, the 453-residue chain is Pup--protein ligase (453 aa).

Glu9 provides a ligand contact to Mg(2+). Arg53 contributes to the ATP binding site. Tyr55 contributes to the Mg(2+) binding site. Asp57 acts as the Proton acceptor in catalysis. Glu63 is a binding site for Mg(2+). Thr66 and Trp420 together coordinate ATP.

The protein belongs to the Pup ligase/Pup deamidase family. Pup-conjugating enzyme subfamily.

It carries out the reaction ATP + [prokaryotic ubiquitin-like protein]-L-glutamate + [protein]-L-lysine = ADP + phosphate + N(6)-([prokaryotic ubiquitin-like protein]-gamma-L-glutamyl)-[protein]-L-lysine.. It functions in the pathway protein degradation; proteasomal Pup-dependent pathway. It participates in protein modification; protein pupylation. Functionally, catalyzes the covalent attachment of the prokaryotic ubiquitin-like protein modifier Pup to the proteasomal substrate proteins, thereby targeting them for proteasomal degradation. This tagging system is termed pupylation. The ligation reaction involves the side-chain carboxylate of the C-terminal glutamate of Pup and the side-chain amino group of a substrate lysine. The protein is Pup--protein ligase of Streptomyces coelicolor (strain ATCC BAA-471 / A3(2) / M145).